The primary structure comprises 494 residues: Alpha-amylase-related protein (494 aa).

The first 20 residues, 1 to 20 (MIKFALALTLCLAGASLSLA), serve as a signal peptide directing secretion. Pyrrolidone carboxylic acid is present on Q21. C48 and C104 are disulfide-bonded. Ca(2+) contacts are provided by N118, Q169, and D178. A disulfide bond links C157 and C171. Residue R206 participates in chloride binding. Catalysis depends on D208, which acts as the Nucleophile. H212 provides a ligand contact to Ca(2+). E245 (proton donor) is an active-site residue. Residues N308 and R343 each contribute to the chloride site. Cystine bridges form between C376-C382, C418-C441, and C448-C460.

This sequence belongs to the glycosyl hydrolase 13 family. In terms of assembly, monomer. Ca(2+) serves as cofactor. Requires chloride as cofactor.

The protein resides in the secreted. The enzyme catalyses Endohydrolysis of (1-&gt;4)-alpha-D-glucosidic linkages in polysaccharides containing three or more (1-&gt;4)-alpha-linked D-glucose units.. This Drosophila bocqueti (Fruit fly) protein is Alpha-amylase-related protein (Amyrel).